The following is a 148-amino-acid chain: Snaclec B3/B5 (148 aa).

An N-terminal signal peptide occupies residues 1–24; that stretch reads MGRFIFVSFGLLVVFLSLSGTGAA. 3 cysteine pairs are disulfide-bonded: Cys27/Cys38, Cys55/Cys144, and Cys121/Cys136. The 112-residue stretch at 34–145 folds into the C-type lectin domain; sequence YDQHCYKVFD…CRLLGHFVCK (112 aa).

It belongs to the snaclec family. Heterodimer; disulfide-linked. Expressed by the venom gland.

The protein resides in the secreted. Functionally, interferes with one step of hemostasis (modulation of platelet aggregation, or coagulation cascade, for example). This is Snaclec B3/B5 from Macrovipera lebetinus (Levantine viper).